Consider the following 467-residue polypeptide: Glutamyl-tRNA reductase (467 aa).

Substrate is bound by residues 49–52, Ser109, 114–116, and Gln120; these read TCNR and EQQ. Cys50 (nucleophile) is an active-site residue. Residue 189–194 coordinates NADP(+); it reads GAGAMG. Residues 446–467 are disordered; sequence GFSDTTRYGTSPAQSSSKYHAE. Residues 447–467 show a composition bias toward polar residues; that stretch reads FSDTTRYGTSPAQSSSKYHAE.

This sequence belongs to the glutamyl-tRNA reductase family. As to quaternary structure, homodimer.

The catalysed reaction is (S)-4-amino-5-oxopentanoate + tRNA(Glu) + NADP(+) = L-glutamyl-tRNA(Glu) + NADPH + H(+). The protein operates within porphyrin-containing compound metabolism; protoporphyrin-IX biosynthesis; 5-aminolevulinate from L-glutamyl-tRNA(Glu): step 1/2. Catalyzes the NADPH-dependent reduction of glutamyl-tRNA(Glu) to glutamate 1-semialdehyde (GSA). This chain is Glutamyl-tRNA reductase, found in Mycobacterium leprae (strain TN).